Here is a 403-residue protein sequence, read N- to C-terminus: Cytochrome P450 monooxygenase ustC (403 aa).

An N-terminal signal peptide occupies residues 1 to 18; the sequence is MSPFIFAVTLTFAILALG. N52 and N92 each carry an N-linked (GlcNAc...) asparagine glycan. Residue C318 coordinates heme.

Belongs to the cytochrome P450 family. The cofactor is heme.

Its pathway is mycotoxin biosynthesis. Its function is as follows. Cytochrome P450 monooxygenase; part of the gene cluster that mediates the biosynthesis of the secondary metabolite ustiloxin B, an antimitotic tetrapeptide. First, ustA is processed by the subtilisin-like endoprotease Kex2 that is outside the ustiloxin B gene cluster, at the C-terminal side of Arg-Lys, after transfer to Golgi apparatus through the endoplasmic reticulum (ER). Cleavage by KEX2 generates 16 peptides YAIG-I to YAIG-XVI. To process the precursor peptide further, at least two peptidases are necessary to cleave the N-terminal and C-terminal sides of the Tyr-Ala-Ile-Gly core peptide which serves as backbone for the synthesis of ustiloxin B, through cyclization and modification of the tyrosine with a non-protein coding amino acid, norvaline. One of the two peptidases must be the serine peptidase ustP; and the other pepdidase is probably ustH. Macrocyclization of the core peptide derived from ustA requires the tyrosinase ustQ, as well as the homologous oxidases ustYa and ustYb, and leads to the production of the first cyclization product N-desmethylustiloxin F. For the formation of N-desmethylustiloxin F, three oxidation steps are required, hydroxylation at the benzylic position, hydroxylation at either the aromatic ring of Tyr or beta-position of Ile, and oxidative cyclization. UstQ may catalyze the oxidation of a phenol moiety, whereas the ustYa and ustYb are most likely responsible for the remaining two-step oxidations. N-desmethylustiloxin F is then methylated by ustM to yield ustiloxin F which in turn substrate of the cytochrome P450 monooxygenase ustC which catalyzes the formation of S-deoxyustiloxin H. The flavoprotein monooxygenases ustF1 and ustF2 then participate in the modification of the side chain of S-deoxyustiloxin H, leading to the synthesis of an oxime intermediate, via ustiloxin H. Finally, carboxylative dehydration performed by the cysteine desulfurase-like protein ustD yields ustiloxin B. In Aspergillus flavus (strain ATCC 200026 / FGSC A1120 / IAM 13836 / NRRL 3357 / JCM 12722 / SRRC 167), this protein is Cytochrome P450 monooxygenase ustC.